Here is a 400-residue protein sequence, read N- to C-terminus: NADH-quinone oxidoreductase subunit D (400 aa).

The protein belongs to the complex I 49 kDa subunit family. In terms of assembly, NDH-1 is composed of 14 different subunits. Subunits NuoB, C, D, E, F, and G constitute the peripheral sector of the complex.

The protein resides in the cell inner membrane. It carries out the reaction a quinone + NADH + 5 H(+)(in) = a quinol + NAD(+) + 4 H(+)(out). Functionally, NDH-1 shuttles electrons from NADH, via FMN and iron-sulfur (Fe-S) centers, to quinones in the respiratory chain. The immediate electron acceptor for the enzyme in this species is believed to be a menaquinone. Couples the redox reaction to proton translocation (for every two electrons transferred, four hydrogen ions are translocated across the cytoplasmic membrane), and thus conserves the redox energy in a proton gradient. The polypeptide is NADH-quinone oxidoreductase subunit D (Chlorobium phaeovibrioides (strain DSM 265 / 1930) (Prosthecochloris vibrioformis (strain DSM 265))).